We begin with the raw amino-acid sequence, 447 residues long: Tubulin beta-2 chain (447 aa).

The GTP site is built by glutamine 11, glutamate 69, serine 138, glycine 142, threonine 143, glycine 144, asparagine 204, and asparagine 226. Glutamate 69 is a Mg(2+) binding site. Residues 426-447 form a disordered region; the sequence is QDAGVDEEEEEYEEEAPLEEEV. The span at 429–447 shows a compositional bias: acidic residues; it reads GVDEEEEEYEEEAPLEEEV.

It belongs to the tubulin family. In terms of assembly, dimer of alpha and beta chains. A typical microtubule is a hollow water-filled tube with an outer diameter of 25 nm and an inner diameter of 15 nM. Alpha-beta heterodimers associate head-to-tail to form protofilaments running lengthwise along the microtubule wall with the beta-tubulin subunit facing the microtubule plus end conferring a structural polarity. Microtubules usually have 13 protofilaments but different protofilament numbers can be found in some organisms and specialized cells. Requires Mg(2+) as cofactor.

The protein resides in the cytoplasm. Its subcellular location is the cytoskeleton. Tubulin is the major constituent of microtubules, a cylinder consisting of laterally associated linear protofilaments composed of alpha- and beta-tubulin heterodimers. Microtubules grow by the addition of GTP-tubulin dimers to the microtubule end, where a stabilizing cap forms. Below the cap, tubulin dimers are in GDP-bound state, owing to GTPase activity of alpha-tubulin. The polypeptide is Tubulin beta-2 chain (TUB2) (Colletotrichum gloeosporioides (Anthracnose fungus)).